The sequence spans 302 residues: Elongation factor Ts (302 aa).

Positions 80-83 are involved in Mg(2+) ion dislocation from EF-Tu; it reads TDFV.

Belongs to the EF-Ts family.

It localises to the cytoplasm. Its function is as follows. Associates with the EF-Tu.GDP complex and induces the exchange of GDP to GTP. It remains bound to the aminoacyl-tRNA.EF-Tu.GTP complex up to the GTP hydrolysis stage on the ribosome. This chain is Elongation factor Ts, found in Methylibium petroleiphilum (strain ATCC BAA-1232 / LMG 22953 / PM1).